The sequence spans 366 residues: Mitogen-activated protein kinase 13 (366 aa).

Residues 25–308 (YVSLTHIGSG…ASQALAHPFF (284 aa)) enclose the Protein kinase domain. ATP is bound at residue 31–39 (IGSGAYGSV). The residue at position 47 (serine 47) is a Phosphoserine. Residue lysine 54 coordinates ATP. Aspartate 150 functions as the Proton acceptor in the catalytic mechanism. Position 180 is a phosphothreonine; by MAP2K3, MAP2K4, MAP2K6 and MAP2K7 (threonine 180). A TXY motif is present at residues 180 to 182 (TGY). Tyrosine 182 carries the phosphotyrosine; by MAP2K3, MAP2K4, MAP2K6 and MAP2K7 modification. At serine 350 the chain carries Phosphoserine.

The protein belongs to the protein kinase superfamily. CMGC Ser/Thr protein kinase family. MAP kinase subfamily. In terms of assembly, interacts with MAPK8IP2. Mg(2+) serves as cofactor. In terms of processing, dually phosphorylated on Thr-180 and Tyr-182 by MAP2K3/MKK3, MAP2K4/MKK4, MAP2K6/MKK6 and MAP2K7/MKK7, which activates the enzyme. Dephosphorylated by dual specificity phosphatase DUSP1.

It carries out the reaction L-seryl-[protein] + ATP = O-phospho-L-seryl-[protein] + ADP + H(+). It catalyses the reaction L-threonyl-[protein] + ATP = O-phospho-L-threonyl-[protein] + ADP + H(+). With respect to regulation, activated by phosphorylation on threonine and tyrosine by dual specificity kinases, MAP2K3/MKK3 MAP2K6/MKK6, MAP2K4/MKK4 and MAP2K7/MKK7. Activation by ultraviolet radiation, hyperosmotic shock, anisomycin or by TNF-alpha is mediated by MAP2K3/MKK3. Inhibited by dual specificity phosphatase DUSP1. Serine/threonine kinase which acts as an essential component of the MAP kinase signal transduction pathway. MAPK13 is one of the four p38 MAPKs which play an important role in the cascades of cellular responses evoked by extracellular stimuli such as pro-inflammatory cytokines or physical stress leading to direct activation of transcription factors such as ELK1 and ATF2. Accordingly, p38 MAPKs phosphorylate a broad range of proteins and it has been estimated that they may have approximately 200 to 300 substrates each. MAPK13 is one of the less studied p38 MAPK isoforms. Some of the targets are downstream kinases such as MAPKAPK2, which are activated through phosphorylation and further phosphorylate additional targets. Plays a role in the regulation of protein translation by phosphorylating and inactivating EEF2K. Involved in cytoskeletal remodeling through phosphorylation of MAPT and STMN1. Mediates UV irradiation induced up-regulation of the gene expression of CXCL14. Plays an important role in the regulation of epidermal keratinocyte differentiation, apoptosis and skin tumor development. Phosphorylates the transcriptional activator MYB in response to stress which leads to rapid MYB degradation via a proteasome-dependent pathway. MAPK13 also phosphorylates and down-regulates PRKD1 during regulation of insulin secretion in pancreatic beta cells. In Bos taurus (Bovine), this protein is Mitogen-activated protein kinase 13 (MAPK13).